A 393-amino-acid chain; its full sequence is Glycocyamine kinase (393 aa).

One can recognise a Phosphagen kinase N-terminal domain in the interval Arg7–His94. One can recognise a Phosphagen kinase C-terminal domain in the interval Tyr120–Leu362. ATP contacts are provided by residues Ser123–Arg127, His186, Arg231, Arg287–His291, Arg315–Glu320, and Asp330. The disordered stretch occupies residues Pro367–Leu393. Low complexity predominate over residues Ser377–Leu393.

It belongs to the ATP:guanido phosphotransferase family. As to quaternary structure, monomer.

It carries out the reaction guanidinoacetate + ATP = phosphoguanidinoacetate + ADP + H(+). In Hediste diversicolor (Sandworm), this protein is Glycocyamine kinase.